We begin with the raw amino-acid sequence, 314 residues long: tRNA dimethylallyltransferase (314 aa).

12–19 (GPTASGKT) is an ATP binding site. 14-19 (TASGKT) provides a ligand contact to substrate. Interaction with substrate tRNA regions lie at residues 37–40 (DSAL) and 162–166 (QRIIR).

The protein belongs to the IPP transferase family. Monomer. It depends on Mg(2+) as a cofactor.

The enzyme catalyses adenosine(37) in tRNA + dimethylallyl diphosphate = N(6)-dimethylallyladenosine(37) in tRNA + diphosphate. Its function is as follows. Catalyzes the transfer of a dimethylallyl group onto the adenine at position 37 in tRNAs that read codons beginning with uridine, leading to the formation of N6-(dimethylallyl)adenosine (i(6)A). The sequence is that of tRNA dimethylallyltransferase from Acinetobacter baumannii (strain SDF).